A 219-amino-acid chain; its full sequence is Histone H1.4 (219 aa).

Residues 1–15 (MSETAPAAPAAPAPA) show a composition bias toward low complexity. Positions 1–41 (MSETAPAAPAAPAPAEKTPIKKKARKAAGGAKRKASGPPVS) are disordered. At Ser-2 the chain carries N-acetylserine. The residue at position 2 (Ser-2) is a Phosphoserine. Residue Lys-17 is modified to N6-acetyllysine. A Phosphothreonine modification is found at Thr-18. The segment covering 20–35 (IKKKARKAAGGAKRKA) has biased composition (basic residues). Lys-26 carries the N6-acetyllysine; alternate modification. Lys-26 is modified (N6-methyllysine; alternate). Residue Lys-34 is modified to N6-(beta-hydroxybutyryl)lysine; alternate. The residue at position 34 (Lys-34) is an N6-succinyllysine; alternate. A Phosphoserine modification is found at Ser-36. Residues 36 to 109 (SGPPVSELIT…GASGSFKLNK (74 aa)) enclose the H15 domain. The residue at position 52 (Lys-52) is an N6-(beta-hydroxybutyryl)lysine. Arg-54 carries the citrulline modification. Lys-64, Lys-85, Lys-90, and Lys-106 each carry N6-(beta-hydroxybutyryl)lysine. Residues 92–219 (TLVQTKGTGA…KPKKTAAKKK (128 aa)) are disordered. Over residues 119–140 (KAKKAGAAKAKKPAGAAKKPKK) the composition is skewed to basic residues. Thr-146 carries the phosphothreonine modification. 2 stretches are compositionally biased toward basic residues: residues 149 to 160 (KSTKKTPKKAKK) and 168 to 185 (KKAKSPKKAKATKAKKAP). Ser-150 carries the post-translational modification ADP-ribosylserine. At Ser-187 the chain carries Phosphoserine. Positions 192–219 (RAVKPKAAKPKTSKPKAAKPKKTAAKKK) are enriched in basic residues.

It belongs to the histone H1/H5 family. Post-translationally, H1 histones are progressively phosphorylated during the cell cycle, becoming maximally phosphorylated during late G2 phase and M phase, and being dephosphorylated sharply thereafter. In terms of processing, acetylated at Lys-26. Deacetylated at Lys-26 by SIRT1. Citrullination at Arg-54 (H1R54ci) by PADI4 takes place within the DNA-binding site of H1 and results in its displacement from chromatin and global chromatin decondensation, thereby promoting pluripotency and stem cell maintenance. Post-translationally, ADP-ribosylated on Ser-150 in response to DNA damage.

The protein localises to the nucleus. The protein resides in the chromosome. Its function is as follows. Histone H1 protein binds to linker DNA between nucleosomes forming the macromolecular structure known as the chromatin fiber. Histones H1 are necessary for the condensation of nucleosome chains into higher-order structured fibers. Also acts as a regulator of individual gene transcription through chromatin remodeling, nucleosome spacing and DNA methylation. This Rattus norvegicus (Rat) protein is Histone H1.4.